A 487-amino-acid polypeptide reads, in one-letter code: Glutamate--tRNA ligase (487 aa).

Positions 12–22 (PSPTGYMHVGN) match the 'HIGH' region motif. The 'KMSKS' region signature appears at 249–253 (KLSKR). Lys-252 lines the ATP pocket.

It belongs to the class-I aminoacyl-tRNA synthetase family. Glutamate--tRNA ligase type 1 subfamily. In terms of assembly, monomer.

The protein localises to the cytoplasm. It catalyses the reaction tRNA(Glu) + L-glutamate + ATP = L-glutamyl-tRNA(Glu) + AMP + diphosphate. Its function is as follows. Catalyzes the attachment of glutamate to tRNA(Glu) in a two-step reaction: glutamate is first activated by ATP to form Glu-AMP and then transferred to the acceptor end of tRNA(Glu). The sequence is that of Glutamate--tRNA ligase from Clostridium novyi (strain NT).